Consider the following 282-residue polypeptide: E3 ubiquitin-protein ligase Siah1 (282 aa).

The tract at residues 1-28 is disordered; it reads MSRQTATALPTGTSKCPPSQRVPTLSGT. The RING-type zinc finger occupies 41–76; that stretch reads CPVCFDYVLPPILQCQSGHLVCSNCRPKLTCCPTCR. The segment at 90-282 is SBD; it reads VANSVLFPCK…LGINVTISMC (193 aa). An SIAH-type zinc finger spans residues 93-153; that stretch reads SVLFPCKYAS…VMPHLLHQHK (61 aa). Residues Cys-98, Cys-105, His-117, Cys-121, Cys-128, Cys-135, His-147, and His-152 each coordinate Zn(2+).

The protein belongs to the SINA (Seven in absentia) family. In terms of assembly, homodimer.

The enzyme catalyses S-ubiquitinyl-[E2 ubiquitin-conjugating enzyme]-L-cysteine + [acceptor protein]-L-lysine = [E2 ubiquitin-conjugating enzyme]-L-cysteine + N(6)-ubiquitinyl-[acceptor protein]-L-lysine.. It participates in protein modification; protein ubiquitination. E3 ubiquitin-protein ligase that mediates ubiquitination and subsequent proteasomal degradation of target proteins. E3 ubiquitin ligases accept ubiquitin from an E2 ubiquitin-conjugating enzyme in the form of a thioester and then directly transfers the ubiquitin to targeted substrates. It probably triggers the ubiquitin-mediated degradation of different substrates. The chain is E3 ubiquitin-protein ligase Siah1 (siah1) from Danio rerio (Zebrafish).